A 252-amino-acid chain; its full sequence is GTP cyclohydrolase 1 type 2 homolog (252 aa).

Positions 65, 66, 103, 220, and 224 each coordinate a divalent metal cation.

The protein belongs to the GTP cyclohydrolase I type 2/NIF3 family. In terms of assembly, homohexamer.

The sequence is that of GTP cyclohydrolase 1 type 2 homolog from Pseudomonas aeruginosa (strain ATCC 15692 / DSM 22644 / CIP 104116 / JCM 14847 / LMG 12228 / 1C / PRS 101 / PAO1).